A 284-amino-acid polypeptide reads, in one-letter code: P2R1A-PPP2R2A-interacting phosphatase regulator 1 (284 aa).

The disordered stretch occupies residues 1–65 (MAQEKMELDL…RRNSTTFPSR (65 aa)). Gly residues predominate over residues 20 to 29 (EGGGPGGGGL). A Phosphoserine modification is found at S32. S34 carries the phosphoserine; by CHEK1 modification. Phosphoserine occurs at positions 42, 45, 59, and 73. Residue K86 forms a Glycyl lysine isopeptide (Lys-Gly) (interchain with G-Cter in SUMO1) linkage. A phosphoserine mark is found at S140 and S144. The residue at position 146 (T146) is a Phosphothreonine. Residues 164 to 185 (SNGLPPSPIPSPTTRFTTRRSQ) are disordered. Over residues 175 to 185 (PTTRFTTRRSQ) the composition is skewed to low complexity. S184 and S186 each carry phosphoserine. Residues 233 to 284 (GVCVSSDTLDGNSSSAGSSCNSPAKVSTTTDSPVSPAQAASPFIPVDELSSK) form a disordered region. Over residues 243–254 (GNSSSAGSSCNS) the composition is skewed to low complexity. A compositionally biased stretch (polar residues) spans 256 to 267 (AKVSTTTDSPVS). Residues S264, S267, and S273 each carry the phosphoserine modification.

This sequence belongs to the FAM122 family. In terms of assembly, interacts with PPP2CA and PPP2R1A. Interacts (via its N-terminus) with PPP2R2A; the interaction is direct and this interaction inhibits PP2A activity. The CHEK1-mediated Ser-34 phosphorylated form interacts with 14-3-3 proteins. In terms of processing, CHEK1-mediated phosphorylation at Ser-34 negatively regulates its ability to inhibit serine/threonine-protein phosphatase 2A (PP2A) activity. Phosphorylation leads to its release from the PP2A complex and its sequestration by 14-3-3 proteins in the cytoplasm resulting in its inability to translocate to the nucleus, where it otherwise inhibits PP2A.

The protein resides in the nucleus. It is found in the cytoplasm. Its function is as follows. Acts as an inhibitor of serine/threonine-protein phosphatase 2A (PP2A) activity. Inhibits PP2A activity by blocking the substrate binding site on PPP2R2A and the active site of PPP2CA. Potentiates ubiquitin-mediated proteasomal degradation of serine/threonine-protein phosphatase 2A catalytic subunit alpha (PPP2CA). Inhibits PP2A-mediated dephosphorylation of WEE1, promoting ubiquitin-mediated proteolysis of WEE1, thereby releasing G2/M checkpoint. The protein is P2R1A-PPP2R2A-interacting phosphatase regulator 1 of Mus musculus (Mouse).